We begin with the raw amino-acid sequence, 612 residues long: Phragmoplastin DRP1D (612 aa).

Methionine 1 is subject to N-acetylmethionine. In terms of domain architecture, Dynamin-type G spans 32 to 301; that stretch reads WEALPSVAVV…LESVIRSRIP (270 aa). The tract at residues 42–49 is G1 motif; the sequence is GGQSSGKS. Residue 45 to 50 coordinates GTP; that stretch reads SSGKSS. Positions 68-70 are G2 motif; the sequence is VTR. A G3 motif region spans residues 143–146; that stretch reads DLPG. The interval 212 to 215 is G4 motif; that stretch reads TKLD. Residues 213-218 and 243-246 each bind GTP; these read KLDLMD and NRSQ. Positions 242 to 245 are G5 motif; it reads VNRS. In terms of domain architecture, GED spans 520 to 612; the sequence is FRKIASNVAA…DEIDAAVWVR (93 aa).

It belongs to the TRAFAC class dynamin-like GTPase superfamily. Dynamin/Fzo/YdjA family. In terms of assembly, forms homodimer and may homooligomerize and heterooligomerize to form the phragmoplastin complex. Binds to PHIP1.

The protein resides in the cytoplasm. It localises to the cytoskeleton. The enzyme catalyses GTP + H2O = GDP + phosphate + H(+). Functionally, putative microtubule-associated force-producing protein. Has a GTPase activity. The polypeptide is Phragmoplastin DRP1D (Arabidopsis thaliana (Mouse-ear cress)).